A 510-amino-acid chain; its full sequence is Guanosine import ATP-binding protein NupO (510 aa).

ABC transporter domains are found at residues 5-240 and 257-501; these read IEML…VGRE and LAID…AGST. An ATP-binding site is contributed by 37–44; that stretch reads GENGAGKS.

The protein belongs to the ABC transporter superfamily. In terms of assembly, the complex is composed of two ATP-binding proteins (NupO), two transmembrane proteins (NupP and NupQ) and a solute-binding protein (NupN).

It localises to the cell membrane. Part of an ABC transporter complex involved in the uptake of guanosine. Responsible for energy coupling to the transport system. May be a nucleoside transporter of broad specificity but with various affinities for different substrates. The chain is Guanosine import ATP-binding protein NupO from Bacillus subtilis (strain 168).